The following is a 284-amino-acid chain: Bifunctional protein FolD (284 aa).

Residues 166 to 168 (GAS) and Ile-232 each bind NADP(+).

Belongs to the tetrahydrofolate dehydrogenase/cyclohydrolase family. As to quaternary structure, homodimer.

The catalysed reaction is (6R)-5,10-methylene-5,6,7,8-tetrahydrofolate + NADP(+) = (6R)-5,10-methenyltetrahydrofolate + NADPH. It catalyses the reaction (6R)-5,10-methenyltetrahydrofolate + H2O = (6R)-10-formyltetrahydrofolate + H(+). Its pathway is one-carbon metabolism; tetrahydrofolate interconversion. Its function is as follows. Catalyzes the oxidation of 5,10-methylenetetrahydrofolate to 5,10-methenyltetrahydrofolate and then the hydrolysis of 5,10-methenyltetrahydrofolate to 10-formyltetrahydrofolate. This chain is Bifunctional protein FolD, found in Shewanella frigidimarina (strain NCIMB 400).